The following is a 93-amino-acid chain: Small ribosomal subunit protein uS19 (93 aa).

It belongs to the universal ribosomal protein uS19 family.

Functionally, protein S19 forms a complex with S13 that binds strongly to the 16S ribosomal RNA. This Thermus thermophilus (strain ATCC BAA-163 / DSM 7039 / HB27) protein is Small ribosomal subunit protein uS19 (rpsS).